A 767-amino-acid chain; its full sequence is Slo-interacting protein 1 (767 aa).

A PDZ domain is found at 202 to 280 (QQSSTDTNKG…SVTLLVSRIL (79 aa)). Disordered regions lie at residues 521 to 557 (GNAAAPGEEVDNSSSAYNTGDSNNSASPHQNTTNPDE) and 744 to 767 (KEERKRHIERAREKRHHQTQQQQQ). Over residues 532–555 (NSSSAYNTGDSNNSASPHQNTTNP) the composition is skewed to polar residues. Over residues 744-755 (KEERKRHIERAR) the composition is skewed to basic and acidic residues.

As to quaternary structure, interacts with Slo. In terms of tissue distribution, in embryos, it is expressed throughout the CNS and in several peripheral locations. Colocalizes with Slo.

Its function is as follows. May selectively reduce calcium-activated potassium channel (Slo) currents by reducing the number of Slo channels in the plasma membrane. This chain is Slo-interacting protein 1 (Slip1), found in Drosophila melanogaster (Fruit fly).